A 365-amino-acid chain; its full sequence is UDP-N-acetylglucosamine--N-acetylmuramyl-(pentapeptide) pyrophosphoryl-undecaprenol N-acetylglucosamine transferase (365 aa).

UDP-N-acetyl-alpha-D-glucosamine contacts are provided by residues 13–15 (TGG), Asn-125, Arg-165, Ser-192, and Gln-293.

This sequence belongs to the glycosyltransferase 28 family. MurG subfamily.

The protein resides in the cell inner membrane. It carries out the reaction di-trans,octa-cis-undecaprenyl diphospho-N-acetyl-alpha-D-muramoyl-L-alanyl-D-glutamyl-meso-2,6-diaminopimeloyl-D-alanyl-D-alanine + UDP-N-acetyl-alpha-D-glucosamine = di-trans,octa-cis-undecaprenyl diphospho-[N-acetyl-alpha-D-glucosaminyl-(1-&gt;4)]-N-acetyl-alpha-D-muramoyl-L-alanyl-D-glutamyl-meso-2,6-diaminopimeloyl-D-alanyl-D-alanine + UDP + H(+). Its pathway is cell wall biogenesis; peptidoglycan biosynthesis. Cell wall formation. Catalyzes the transfer of a GlcNAc subunit on undecaprenyl-pyrophosphoryl-MurNAc-pentapeptide (lipid intermediate I) to form undecaprenyl-pyrophosphoryl-MurNAc-(pentapeptide)GlcNAc (lipid intermediate II). The polypeptide is UDP-N-acetylglucosamine--N-acetylmuramyl-(pentapeptide) pyrophosphoryl-undecaprenol N-acetylglucosamine transferase (Ruegeria sp. (strain TM1040) (Silicibacter sp.)).